The primary structure comprises 482 residues: Nicotine dehydrogenase (482 aa).

A signal peptide (tat-type signal) is located at residues 1–38 (MSDKTKTNEGFSRRSFIGSAAVVTAGVAGLGAIDAASA). Residues A64, E83, A84, R85, R91, W108, and V279 each coordinate FAD. T381 is a binding site for (S)-nicotine. FAD contacts are provided by A453, N462, and I463.

The protein belongs to the flavin monoamine oxidase family. As to quaternary structure, monomer in solution. Homodimer in solution. Forms homodimers in the crystal. It depends on FAD as a cofactor. Predicted to be exported by the Tat system. The position of the signal peptide cleavage has not been experimentally proven.

Its subcellular location is the periplasm. The enzyme catalyses (S)-nicotine + 2 Fe(III)-[cytochrome c] = N-methylmyosmine + 2 Fe(II)-[cytochrome c] + 2 H(+). Its pathway is alkaloid degradation; nicotine degradation. With respect to regulation, the catalytic rate is not significantly affected by pH. Functionally, involved in nicotine degradation. Catalyzes the conversion of nicotine to N-methylmyosmine. N-methylmyosmine undergoes spontaneous hydrolysis to form pseudooxynicotine (PN). S-nicotine is the optimal substrate. Has lower activity with some nicotine analogs, but shows no activity towards neurotransmitters, including serotonin, dopamine, and norepinephrine, nicotine metabolites and common neuroactive drugs. The enzyme is stereospecific with poor activity with (R)-nicotine as the substrate. The c-type cytochrome protein CycN is the physiological electron acceptor. O(2) is a poor electron acceptor. In Pseudomonas putida (strain DSM 28022 / S16), this protein is Nicotine dehydrogenase.